Reading from the N-terminus, the 238-residue chain is Fatty acid metabolism regulator protein (238 aa).

An HTH gntR-type domain is found at 6–74 (KGPASFAEKY…HGKPTRVNNF (69 aa)). The H-T-H motif DNA-binding region spans 34–53 (ERELSELIGVTRTTLREVLQ).

Homodimer.

It is found in the cytoplasm. Multifunctional regulator of fatty acid metabolism. The chain is Fatty acid metabolism regulator protein from Shewanella putrefaciens (strain CN-32 / ATCC BAA-453).